The chain runs to 92 residues: Large ribosomal subunit protein eL31 (92 aa).

The protein belongs to the eukaryotic ribosomal protein eL31 family.

The polypeptide is Large ribosomal subunit protein eL31 (Halobacterium salinarum (strain ATCC 29341 / DSM 671 / R1)).